The primary structure comprises 351 residues: D-alanine--D-alanine ligase (351 aa).

In terms of domain architecture, ATP-grasp spans 141-349 (KAAFSAAGLP…ISQLVARLIE (209 aa)). An ATP-binding site is contributed by 176 to 231 (ETQLGYPCFIKPANLGSSVGISKAYDKKELLNGLDLAAQLDSRIVVEKNIKARELE). Asp-302, Glu-316, and Asn-318 together coordinate Mg(2+).

The protein belongs to the D-alanine--D-alanine ligase family. The cofactor is Mg(2+). Mn(2+) is required as a cofactor.

It is found in the cytoplasm. It carries out the reaction 2 D-alanine + ATP = D-alanyl-D-alanine + ADP + phosphate + H(+). Its pathway is cell wall biogenesis; peptidoglycan biosynthesis. Cell wall formation. The chain is D-alanine--D-alanine ligase from Prochlorococcus marinus (strain SARG / CCMP1375 / SS120).